An 85-amino-acid chain; its full sequence is Large ribosomal subunit protein bL27 (85 aa).

A disordered region spans residues 1 to 20; the sequence is MATKKAGGSTRNGRDSEAKR.

Belongs to the bacterial ribosomal protein bL27 family.

The polypeptide is Large ribosomal subunit protein bL27 (Pasteurella multocida (strain Pm70)).